The sequence spans 880 residues: DNA polymerase I (880 aa).

The 5'-3' exonuclease domain occupies threonine 174–arginine 268. A 3'-5' exonuclease domain is found at aspartate 302–glutamate 470.

This sequence belongs to the DNA polymerase type-A family. In terms of assembly, single-chain monomer with multiple functions.

The enzyme catalyses DNA(n) + a 2'-deoxyribonucleoside 5'-triphosphate = DNA(n+1) + diphosphate. Its function is as follows. In addition to polymerase activity, this DNA polymerase exhibits 3'-5' and 5'-3' exonuclease activity. This is DNA polymerase I (polA) from Bacillus subtilis (strain 168).